The following is a 282-amino-acid chain: Sirohydrochlorin cobaltochelatase CbiKC (282 aa).

Histidine 166 acts as the Proton acceptor in catalysis. Co(2+) contacts are provided by histidine 166 and histidine 228.

This sequence belongs to the CbiK family.

It is found in the cytoplasm. It catalyses the reaction Co-sirohydrochlorin + 2 H(+) = sirohydrochlorin + Co(2+). The enzyme catalyses siroheme + 2 H(+) = sirohydrochlorin + Fe(2+). It participates in cofactor biosynthesis; adenosylcobalamin biosynthesis; cob(II)yrinate a,c-diamide from sirohydrochlorin (anaerobic route): step 1/10. The protein operates within porphyrin-containing compound metabolism; siroheme biosynthesis; siroheme from sirohydrochlorin: step 1/1. Functionally, catalyzes the insertion of Co(2+) into sirohydrochlorin as part of the anaerobic pathway to cobalamin biosynthesis. To a lesser extent, is also able to insert Fe(2+) into sirohydrochlorin, yielding siroheme. The chain is Sirohydrochlorin cobaltochelatase CbiKC (cbiKc) from Nitratidesulfovibrio vulgaris (strain ATCC 29579 / DSM 644 / CCUG 34227 / NCIMB 8303 / VKM B-1760 / Hildenborough) (Desulfovibrio vulgaris).